Reading from the N-terminus, the 458-residue chain is NADH-quinone oxidoreductase subunit N (458 aa).

14 helical membrane-spanning segments follow: residues 2–22 (LLILPEITLTLIALLGQCFAL), 30–50 (IIYNIVILLCIISIFLTFKYS), 62–82 (GINIGISKSIVLLFTIVSLII), 93–113 (AIKFEFITLILLSIVGIFVAI), 118–138 (FLLLFCGMELTALTSYALAGF), 153–173 (FILGSLVTCLSLFGISFIYGF), 196–216 (LIIGIVLFLSSIFFKLASSPL), 235–255 (FTSAAKIGMVIVLFNISKLII), 261–281 (INYNLIKIIAILSMLFGAFGA), 290–310 (LMAYSTILNIGYVLIGVILPN), 319–339 (LYILIYAVVSIGFFTCLIMLF), 361–381 (IAALISIVMFSMIGIPPLTGF), 397–417 (FTLAYCGIFTSVVAAFYYLKV), and 438–458 (LLLINYLVLVFLLFGSFIILF).

The protein belongs to the complex I subunit 2 family. As to quaternary structure, NDH-1 is composed of 14 different subunits. Subunits NuoA, H, J, K, L, M, N constitute the membrane sector of the complex.

Its subcellular location is the cell inner membrane. The catalysed reaction is a quinone + NADH + 5 H(+)(in) = a quinol + NAD(+) + 4 H(+)(out). Its function is as follows. NDH-1 shuttles electrons from NADH, via FMN and iron-sulfur (Fe-S) centers, to quinones in the respiratory chain. The immediate electron acceptor for the enzyme in this species is believed to be ubiquinone. Couples the redox reaction to proton translocation (for every two electrons transferred, four hydrogen ions are translocated across the cytoplasmic membrane), and thus conserves the redox energy in a proton gradient. This is NADH-quinone oxidoreductase subunit N from Rickettsia typhi (strain ATCC VR-144 / Wilmington).